Here is a 508-residue protein sequence, read N- to C-terminus: Glycerol kinase (508 aa).

T14 is an ADP binding site. Residues T14, T15, and S16 each contribute to the ATP site. T14 contributes to the sn-glycerol 3-phosphate binding site. Position 18 (R18) interacts with ADP. Sn-glycerol 3-phosphate contacts are provided by R84, E85, and Y136. Residues R84, E85, and Y136 each coordinate glycerol. H232 is subject to Phosphohistidine; by HPr. D246 contacts sn-glycerol 3-phosphate. Residues D246 and Q247 each coordinate glycerol. ADP contacts are provided by T268 and G311. The ATP site is built by T268, G311, Q315, and G412. ADP contacts are provided by G412 and N416.

This sequence belongs to the FGGY kinase family. Homotetramer and homodimer (in equilibrium). The phosphoenolpyruvate-dependent sugar phosphotransferase system (PTS), including enzyme I, and histidine-containing protein (HPr) are required for the phosphorylation, which leads to the activation of the enzyme.

The catalysed reaction is glycerol + ATP = sn-glycerol 3-phosphate + ADP + H(+). It participates in polyol metabolism; glycerol degradation via glycerol kinase pathway; sn-glycerol 3-phosphate from glycerol: step 1/1. Activated by phosphorylation and inhibited by fructose 1,6-bisphosphate (FBP). In terms of biological role, key enzyme in the regulation of glycerol uptake and metabolism. Catalyzes the phosphorylation of glycerol to yield sn-glycerol 3-phosphate. The polypeptide is Glycerol kinase (Streptococcus pyogenes serotype M4 (strain MGAS10750)).